The following is a 305-amino-acid chain: Acyl transferase (305 aa).

Active-site charge relay system residues include S116, D213, and H243.

The protein belongs to the LuxD family.

It participates in lipid metabolism; fatty acid reduction for biolumincescence. Functionally, acyl transferase is part of the fatty acid reductase system required for aldehyde biosynthesis; it produces fatty acids for the luminescent reaction. The sequence is that of Acyl transferase from Photobacterium leiognathi.